The chain runs to 255 residues: Placenta-expressed transcript 1 protein (255 aa).

An N-terminal signal peptide occupies residues 1–26; sequence MPALRTLLPHLGLFLCLALCFSPSFS. 3 N-linked (GlcNAc...) asparagine glycosylation sites follow: Asn-57, Asn-67, and Asn-126. The GPI-anchor amidated serine moiety is linked to residue Ser-236. A propeptide spans 237–255 (removed in mature form); that stretch reads PLAGALHILLVFLISKLLF.

Post-translationally, N-glycosylated. In terms of processing, GPI-anchored.

It localises to the apical cell membrane. Modulates leading keratinocyte migration and cellular adhesion to matrix proteins during a wound-healing response and promotes wound repair. May play a role during trichilemmal differentiation of the hair follicle. This Rattus norvegicus (Rat) protein is Placenta-expressed transcript 1 protein (Plet1).